Consider the following 324-residue polypeptide: Dioxygenase tasH (324 aa).

An N-terminal signal peptide occupies residues 1–25 (MRSMSLWMLIGPVTGIATWASLRYA). Residues histidine 50, histidine 96, and histidine 284 each coordinate Zn(2+).

The protein belongs to the DODA-type extradiol aromatic ring-opening dioxygenase family. Monomer. Zn(2+) serves as cofactor.

Functionally, dioxygenase; part of the gene cluster that mediates the biosynthesis of the tetramic acids Sch210971 and Sch210972, potential anti-HIV fungal natural product that contain a decalin core. The PKS module of tasS together with the enoylreductase tasC catalyze the formation of the polyketide unit which is then conjugated to 4-hydroxyl-4-methyl glutamate (HMG) by the condensation domain of the tasS NRPS module. One unique structural feature of Sch210971 and Sch210972 is the tetramic acid motif proposed to be derived from the non-proteinogenic amino acid HMG, by a Dieckmann-type condensation catalyzed by the reductase domain of tasS. The aldolase tasA catalyzes the aldol condensation of 2 molecules of pyruvic acid to yield the intermediate 4-hydroxyl-4-methyl-2-oxoglutarate (HMOG), which can then be stereoselectively transaminated, may be by tasG, to form HMG. The Diels-Alderase tas3 then uses the Dieckmann product of tasS as substrate and catalyzes the Diels-Alder cycloaddition to form the decalin ring of Sch210971 and Sch210972. In Hapsidospora irregularis, this protein is Dioxygenase tasH.